The primary structure comprises 398 residues: S-adenosylmethionine synthase 2 (398 aa).

An ATP-binding site is contributed by histidine 16. Aspartate 18 serves as a coordination point for Mg(2+). Glutamate 51 provides a ligand contact to K(+). Glutamate 64 and glutamine 108 together coordinate L-methionine. The tract at residues 108–118 is flexible loop; the sequence is QSADIAQGVDA. ATP contacts are provided by residues 176-178, 242-243, aspartate 251, 257-258, alanine 274, and lysine 278; these read DSK, KF, and RK. Aspartate 251 contributes to the L-methionine binding site. Lysine 282 is an L-methionine binding site.

The protein belongs to the AdoMet synthase family. As to quaternary structure, homotetramer; dimer of dimers. Mg(2+) serves as cofactor. Requires K(+) as cofactor.

Its subcellular location is the cytoplasm. The enzyme catalyses L-methionine + ATP + H2O = S-adenosyl-L-methionine + phosphate + diphosphate. It participates in amino-acid biosynthesis; S-adenosyl-L-methionine biosynthesis; S-adenosyl-L-methionine from L-methionine: step 1/1. Catalyzes the formation of S-adenosylmethionine (AdoMet) from methionine and ATP. The overall synthetic reaction is composed of two sequential steps, AdoMet formation and the subsequent tripolyphosphate hydrolysis which occurs prior to release of AdoMet from the enzyme. This is S-adenosylmethionine synthase 2 from Rhodopseudomonas palustris (strain BisB18).